We begin with the raw amino-acid sequence, 967 residues long: MSTKFANDSNTNARPEKPFIARMIHAFAVPIILGWLAVCVVVTVFVPSLEAVGQERSVSLSPKDAPSFEAMGRIGMVFKEGDSDSFAMVIIEGNQPLGDAAHKYYDGLVAQLRADKKHVQSVQDLWGDPLTAAGVQSNDGKAAYVQLSLAGNQGTPLANESVEAVRSIVESTPAPPGIKAYVTGPSALAADMHHSGDRSMARITMVTVAVIFIMLLLVYRSIITVVLLLITVGVELTAARGVVAVLGHSGAIGLTTFAVSLLTSLAIAAGTDYGIFIIGRYQEARQAGEDKEAAYYTMYRGTAHVILGSGLTIAGATFCLSFARMPYFQTLGIPCAVGMLVAVAVALTLGPAVLHVGSRFGLFDPKRLLKVRGWRRVGTVVVRWPLPVLVATCAIALVGLLALPGYKTSYNDRDYLPDFIPANQGYAAADRHFSQARMKPEILMIESDHDMRNPADFLVLDKLAKGIFRVPGISRVQAITRPEGTTMDHTSIPFQISMQNAGQLQTIKYQRDRANDMLKQADEMATTIAVLTRMHSLMAEMASTTHRMVGDTEEMKEITEELRDHVADFDDFWRPIRSYFYWEKHCYGIPICWSFRSIFDALDGIDKLSEQIGVLLGDLREMDRLMPQMVAQIPPQIEAMENMRTMILTMHSTMTGIFDQMLEMSDNATAMGKAFDAAKNDDSFYLPPEVFKNKDFQRAMKSFLSSDGHAARFIILHRGDPQSPEGIKSIDAIRTAAEESLKGTPLEDAKIYLAGTAAVFHDISEGAQWDLLIAAISSLCLIFIIMLIITRAFIAAAVIVGTVALSLGASFGLSVLLWQHILAIHLHWLVLAMSVIVLLAVGSDYNLLLVSRFKQEIGAGLKTGIIRSMGGTGKVVTNAGLVFAVTMASMAVSDLRVIGQVGTTIGLGLLFDTLIVRSFMTPSIAALLGRWFWWPLRVRSRPARTPTVPSETQPAGRPLAMSSDRLG.

11 helical membrane passes run 26–46 (AFAV…TVFV), 210–230 (VIFI…LLLI), 242–262 (VVAV…VSLL), 303–323 (AHVI…LSFA), 333–353 (IPCA…GPAV), 384–404 (WPLP…LALP), 769–789 (WDLL…MLII), 793–813 (FIAA…SFGL), 821–841 (ILAI…LLAV), 875–895 (VVTN…VSDL), and 913–934 (TLIV…WFWW). The tract at residues 943–967 (ARTPTVPSETQPAGRPLAMSSDRLG) is disordered.

This sequence belongs to the resistance-nodulation-cell division (RND) (TC 2.A.6) family. MmpL subfamily. In terms of assembly, interacts with MmpS4.

The protein resides in the cell inner membrane. Its function is as follows. Part of an export system, which is required for biosynthesis and secretion of siderophores. The chain is Siderophore exporter MmpL4 (mmpL4) from Mycobacterium tuberculosis (strain CDC 1551 / Oshkosh).